The following is a 268-amino-acid chain: Ubiquinone biosynthesis protein COQ4 homolog, mitochondrial (268 aa).

4 residues coordinate Zn(2+): His-171, Asp-172, His-175, and Glu-187.

It belongs to the COQ4 family. In terms of assembly, component of a multi-subunit COQ enzyme complex. It depends on Zn(2+) as a cofactor.

The protein resides in the mitochondrion inner membrane. It carries out the reaction a 4-hydroxy-3-methoxy-5-(all-trans-polyprenyl)benzoate + H(+) = a 2-methoxy-6-(all-trans-polyprenyl)phenol + CO2. It participates in cofactor biosynthesis; ubiquinone biosynthesis. Lyase that catalyzes the C1-decarboxylation of 4-hydroxy-3-methoxy-5-(all-trans-polyprenyl)benzoic acid into 2-methoxy-6-(all-trans-polyprenyl)phenol during ubiquinone biosynthesis. The chain is Ubiquinone biosynthesis protein COQ4 homolog, mitochondrial from Drosophila erecta (Fruit fly).